The following is a 188-amino-acid chain: Elongation factor P (188 aa).

An N6-(3,6-diaminohexanoyl)-5-hydroxylysine modification is found at lysine 34.

Belongs to the elongation factor P family. May be beta-lysylated on the epsilon-amino group of Lys-34 by the combined action of EpmA and EpmB, and then hydroxylated on the C5 position of the same residue by EpmC (if this protein is present). Lysylation is critical for the stimulatory effect of EF-P on peptide-bond formation. The lysylation moiety may extend toward the peptidyltransferase center and stabilize the terminal 3-CCA end of the tRNA. Hydroxylation of the C5 position on Lys-34 may allow additional potential stabilizing hydrogen-bond interactions with the P-tRNA.

The protein resides in the cytoplasm. Its pathway is protein biosynthesis; polypeptide chain elongation. Its function is as follows. Involved in peptide bond synthesis. Alleviates ribosome stalling that occurs when 3 or more consecutive Pro residues or the sequence PPG is present in a protein, possibly by augmenting the peptidyl transferase activity of the ribosome. Modification of Lys-34 is required for alleviation. This is Elongation factor P from Vibrio vulnificus (strain CMCP6).